The sequence spans 354 residues: 4-hydroxy-3-methylbut-2-en-1-yl diphosphate synthase (flavodoxin) (354 aa).

[4Fe-4S] cluster contacts are provided by Cys-265, Cys-268, Cys-300, and Glu-307.

It belongs to the IspG family. [4Fe-4S] cluster serves as cofactor.

It carries out the reaction (2E)-4-hydroxy-3-methylbut-2-enyl diphosphate + oxidized [flavodoxin] + H2O + 2 H(+) = 2-C-methyl-D-erythritol 2,4-cyclic diphosphate + reduced [flavodoxin]. Its pathway is isoprenoid biosynthesis; isopentenyl diphosphate biosynthesis via DXP pathway; isopentenyl diphosphate from 1-deoxy-D-xylulose 5-phosphate: step 5/6. Its function is as follows. Converts 2C-methyl-D-erythritol 2,4-cyclodiphosphate (ME-2,4cPP) into 1-hydroxy-2-methyl-2-(E)-butenyl 4-diphosphate. In Hydrogenobaculum sp. (strain Y04AAS1), this protein is 4-hydroxy-3-methylbut-2-en-1-yl diphosphate synthase (flavodoxin).